We begin with the raw amino-acid sequence, 493 residues long: Glycerol kinase (493 aa).

ADP is bound at residue Thr-12. ATP contacts are provided by Thr-12, Thr-13, and Ser-14. Position 12 (Thr-12) interacts with sn-glycerol 3-phosphate. An ADP-binding site is contributed by Arg-16. The sn-glycerol 3-phosphate site is built by Arg-82, Glu-83, Tyr-132, and Asp-239. Glycerol contacts are provided by Arg-82, Glu-83, Tyr-132, Asp-239, and Gln-240. 2 residues coordinate ADP: Thr-261 and Gly-303. Residues Thr-261, Gly-303, Gln-307, and Gly-402 each coordinate ATP. Residues Gly-402 and Asn-406 each contribute to the ADP site.

The protein belongs to the FGGY kinase family.

The enzyme catalyses glycerol + ATP = sn-glycerol 3-phosphate + ADP + H(+). It functions in the pathway polyol metabolism; glycerol degradation via glycerol kinase pathway; sn-glycerol 3-phosphate from glycerol: step 1/1. Functionally, key enzyme in the regulation of glycerol uptake and metabolism. Catalyzes the phosphorylation of glycerol to yield sn-glycerol 3-phosphate. The sequence is that of Glycerol kinase from Thermococcus gammatolerans (strain DSM 15229 / JCM 11827 / EJ3).